The following is a 345-amino-acid chain: MLALRKTLLHGRLPAAPPAAAAAAIASRIPALLRRLSSSPGDGQGGDEWGSSWSTGITKEHFDGSDAAVGRPVTSPSKPVSPELAAVRAMDEEDEIFRAMERDNREAKAYVDSWGDRMRETCELLKQVREPGSRGSYLKDSEKQEMYRLHKEDPETYTVERLAKDFRVMRQRVHAILWLKEMEEEEERKLGKPLDDSVEVLLDSCPEFFNSHDREFHVASLPYKPDFKVMPEGWDGTTRDPDEVLYEISMKEDQMLYEEFVQRLQFNKKKVAGEVKCHKYSRRRPDDGWTYMVEKLGVQSKRGSGGGWKFASLPDGSSRPLNDMEKMYVKRETPKRRRRIMAPFK.

The transit peptide at Met1–Gly43 directs the protein to the mitochondrion. The interval Leu36–Pro82 is disordered.

Its subcellular location is the mitochondrion. Functionally, essential for fertility (male and female gametophyte functions and development). Required for the integrity of female gametic mitochondria. Involved in embryo apical-basal patterning, and particularly dorsal-ventral patterning, during early embryogenesis, and endosperm free nucleus positioning and development as well as early endosperm development, probably by modulating the expression pattern of related genes (e.g. AL1, MYB3/AL2, CYP78A13/GE, PNH1, HAZ1, MPK6 and OSH1). Has function in triggering of endosperm programmed cell death (PCD) leading to syncytial endosperm cellularization and starchy endosperm cell maturation. Implicated in central vacuole dynamics necessary for microspore development leading to pollen production, and for pollen development and germination. In Oryza sativa subsp. indica (Rice), this protein is Protein GAMETE CELL DEFECTIVE 1, mitochondrial.